The chain runs to 304 residues: L-threonate dehydrogenase (304 aa).

NAD(+) is bound by residues 7-35 and threonine 102; that span reads YAVAVIGLGSMGFGAAASCINAGLTTYGV. Residue lysine 178 is part of the active site. Residue lysine 246 participates in NAD(+) binding.

This sequence belongs to the HIBADH-related family. L-threonate dehydrogenase subfamily.

It carries out the reaction L-threonate + NAD(+) = 2-dehydro-L-erythronate + NADH + H(+). Its function is as follows. Catalyzes oxidation of L-threonate to 2-oxo-tetronate. Can use either NAD(+) or NADP(+) as cosubstrate, with a preference for NAD(+). This chain is L-threonate dehydrogenase, found in Pectobacterium atrosepticum (strain SCRI 1043 / ATCC BAA-672) (Erwinia carotovora subsp. atroseptica).